Reading from the N-terminus, the 449-residue chain is Serum response factor homolog (449 aa).

The interval Leu-23–Gly-166 is disordered. Residues Gln-69–Ser-80 show a composition bias toward polar residues. Over residues Gln-81–Gln-107 the composition is skewed to low complexity. Position 156 is a phosphoserine (Ser-156). The MADS-box domain maps to Arg-167–Lys-225. Disordered stretches follow at residues Tyr-270–Ser-360 and Leu-418–Asp-449. 2 stretches are compositionally biased toward low complexity: residues Ser-317–Ser-331 and Thr-345–Ala-354.

In terms of tissue distribution, after germ band retraction, high levels of zygotic expression are observed in a distinct subset of peripheral tracheal cells distributed throughout the embryo and low levels in somatic muscle. Expressed in the future intervein tissue of the wing imaginal disk from the third instar larvae until eclosion of the adult fly (at protein level).

It is found in the nucleus. Its function is as follows. Required for the formation of intervein tissue of the wing. Acts in a dosage-dependent manner to suppress wing vein formation and promote development of intervein cells. Might play a role in the proper formation and maintenance of the trachea. This is Serum response factor homolog (bs) from Drosophila melanogaster (Fruit fly).